Reading from the N-terminus, the 185-residue chain is Ribosome-recycling factor (185 aa).

This sequence belongs to the RRF family.

It localises to the cytoplasm. Responsible for the release of ribosomes from messenger RNA at the termination of protein biosynthesis. May increase the efficiency of translation by recycling ribosomes from one round of translation to another. In Nocardia farcinica (strain IFM 10152), this protein is Ribosome-recycling factor.